The primary structure comprises 143 residues: Alpha-S2-casein-like B (143 aa).

The first 15 residues, Met1 to Ala15, serve as a signal peptide directing secretion.

It belongs to the alpha-casein family. As to expression, mammary gland specific. Secreted in milk.

Its subcellular location is the secreted. Functionally, important role in the capacity of milk to transport calcium phosphate. The sequence is that of Alpha-S2-casein-like B (Csn1s2b) from Mus musculus (Mouse).